The sequence spans 211 residues: MTSPMQRTRVKICGLTREEDIDAAVAAGADALGFVLWPGSSRAIDEARLARLAARVPAFVTRVGLFVDQADDEIRRYARHLDLVQLHGNESPDDCARLDTPWIKALRMRDGIDLHAEMSRYDAARGLLLDAYRPGVPGGTGETFDWSRIPANLAKPVILAGGLTADNVAEAIHRVRPYAVDVSGGVEAAKGLKDPARIRAFLSQVSHTQAP.

The protein belongs to the TrpF family.

It carries out the reaction N-(5-phospho-beta-D-ribosyl)anthranilate = 1-(2-carboxyphenylamino)-1-deoxy-D-ribulose 5-phosphate. The protein operates within amino-acid biosynthesis; L-tryptophan biosynthesis; L-tryptophan from chorismate: step 3/5. The chain is N-(5'-phosphoribosyl)anthranilate isomerase from Chromohalobacter salexigens (strain ATCC BAA-138 / DSM 3043 / CIP 106854 / NCIMB 13768 / 1H11).